The chain runs to 715 residues: Myosin light chain kinase 3 (715 aa).

Residues 67–114 (VTLPNDPSSQHSPEAHTGASEPLKPVSAGESSKALQKAKEISVKSSEP) are disordered. The region spanning 404-659 (VNPVEVLGGG…ASGCMKHSWL (256 aa)) is the Protein kinase domain. ATP-binding positions include 410 to 418 (LGGGRFGQV) and K433. The Proton acceptor role is filled by D525.

This sequence belongs to the protein kinase superfamily. CAMK Ser/Thr protein kinase family. It depends on Mg(2+) as a cofactor. Post-translationally, phosphorylated on serine residues.

The protein resides in the cytoplasm. It carries out the reaction L-seryl-[myosin light chain] + ATP = O-phospho-L-seryl-[myosin light chain] + ADP + H(+). The enzyme catalyses L-threonyl-[myosin light chain] + ATP = O-phospho-L-threonyl-[myosin light chain] + ADP + H(+). Kinase that phosphorylates MYL2 in vitro. Increases cardiomyocyte contractility. Required for sarcomere formation in the developing heart. This is Myosin light chain kinase 3 (mylk3) from Danio rerio (Zebrafish).